A 364-amino-acid chain; its full sequence is Pyrimidine monooxygenase RutA (364 aa).

Residues Ile-49–Lys-50, Asn-115, Glu-124, Arg-140–Tyr-141, and Ser-190 each bind FMN.

The protein belongs to the NtaA/SnaA/DszA monooxygenase family. RutA subfamily.

The enzyme catalyses uracil + FMNH2 + NADH + O2 = (Z)-3-ureidoacrylate + FMN + NAD(+) + H2O + H(+). It catalyses the reaction thymine + FMNH2 + NADH + O2 = (Z)-2-methylureidoacrylate + FMN + NAD(+) + H2O + H(+). In terms of biological role, catalyzes the pyrimidine ring opening between N-3 and C-4 by an unusual flavin hydroperoxide-catalyzed mechanism, adding oxygen atoms in the process to yield ureidoacrylate peracid, that immediately reacts with FMN forming ureidoacrylate and FMN-N(5)-oxide. The FMN-N(5)-oxide reacts spontaneously with NADH to produce FMN. Requires the flavin reductase RutF to regenerate FMN in vivo. The polypeptide is Pyrimidine monooxygenase RutA (Methylorubrum extorquens (strain ATCC 14718 / DSM 1338 / JCM 2805 / NCIMB 9133 / AM1) (Methylobacterium extorquens)).